The primary structure comprises 370 residues: Peptide chain release factor 1 (370 aa).

Position 239 is an N5-methylglutamine (glutamine 239).

The protein belongs to the prokaryotic/mitochondrial release factor family. In terms of processing, methylated by PrmC. Methylation increases the termination efficiency of RF1.

Its subcellular location is the cytoplasm. In terms of biological role, peptide chain release factor 1 directs the termination of translation in response to the peptide chain termination codons UAG and UAA. The protein is Peptide chain release factor 1 of Bacteroides fragilis (strain ATCC 25285 / DSM 2151 / CCUG 4856 / JCM 11019 / LMG 10263 / NCTC 9343 / Onslow / VPI 2553 / EN-2).